A 139-amino-acid polypeptide reads, in one-letter code: Antitoxin HicB 2 (139 aa).

Residues 87-137 (MLQTRTSNAELARLLGTRPQEIQRIVSLSHSTKIDTIANALNALGKHLELV) form the HTH cro/C1-type domain. The H-T-H motif DNA-binding region spans 96 to 113 (ELARLLGTRPQEIQRIVS).

Belongs to the HicB antitoxin family. As to quaternary structure, probably forms a complex with the probable mRNA interferase HicA2 (its cognate toxin); when complexed with HicA inhibits the toxin activity.

Its function is as follows. Antitoxin component of a type II toxin-antitoxin (TA) system. Functions as an mRNA interferase antitoxin preventing effects of the HicA 2 toxin. In Photorhabdus laumondii subsp. laumondii (strain DSM 15139 / CIP 105565 / TT01) (Photorhabdus luminescens subsp. laumondii), this protein is Antitoxin HicB 2 (hicB2).